A 230-amino-acid chain; its full sequence is Sodium channel modifier 1 (230 aa).

Phosphoserine is present on serine 2. Positions 4–20 (KREGDDWSQLNVLKKRR) match the Bipartite nuclear localization signal motif. Residues 42 to 74 (FACAICPHRPVLDTLAMLTAHRAGKKHLSSLQL) form a Matrin-type zinc finger. Lysine 67 participates in a covalent cross-link: Glycyl lysine isopeptide (Lys-Gly) (interchain with G-Cter in SUMO2). Disordered stretches follow at residues 76 to 106 (YGKK…EAPL), 129 to 186 (RRKY…SPTR), and 200 to 230 (GWIP…LPLD). Residues 81–102 (PGKERKQNPKHQNELRREETKA) are compositionally biased toward basic and acidic residues. Serine 144 carries the post-translational modification Phosphoserine. Low complexity predominate over residues 164 to 174 (PAAGPQAEESA). Position 183 is a phosphoserine (serine 183). The required for interaction with LUC7L2 stretch occupies residues 188 to 230 (RALDHYLTLRSSGWIPDGRGRWVKDENVEFDSDEEEPPDLPLD). The span at 205 to 214 (GRGRWVKDEN) shows a compositional bias: basic and acidic residues. The segment covering 215–230 (VEFDSDEEEPPDLPLD) has biased composition (acidic residues). A Phosphoserine modification is found at serine 219.

Component of the minor spliceosome, which splices U12-type introns. Within this complex, interacts with RNF113A, as well as with SF3B1/SF3b155, SF3B2/SF3b145, SF3B3/SF3b130 and CDC5L. May interact with LUC7L2 and SNRNP70.

It is found in the nucleus. The protein localises to the nucleoplasm. Its subcellular location is the nucleus speckle. Its function is as follows. As a component of the minor spliceosome, involved in the splicing of U12-type introns in pre-mRNAs. Plays a role in the regulation of primary cilia length and Hedgehog signaling. This chain is Sodium channel modifier 1 (SCNM1), found in Homo sapiens (Human).